Consider the following 513-residue polypeptide: Cytochrome P450 monooxygenase sthF (513 aa).

2 helical membrane passes run 13-33 (FPSL…YIFI) and 212-232 (MLHP…IILL). Cys-452 contributes to the heme binding site.

It belongs to the cytochrome P450 family. The cofactor is heme.

The protein localises to the membrane. The catalysed reaction is dehydroprobetaenone I + NADPH + O2 + H(+) = epoxybetaenone + NADP(+) + H2O. It carries out the reaction dehydroprobetaenone I + 3 NADPH + 3 O2 + 3 H(+) = betaenone C + 3 NADP(+) + 3 H2O. It catalyses the reaction probetaenone I + 3 NADPH + 3 O2 + 3 H(+) = betaenone B + 3 NADP(+) + 3 H2O. The protein operates within mycotoxin biosynthesis. Functionally, cytochrome P450 monooxygenase; part of the gene cluster that mediates the biosynthesis of the phytotoxin stemphyloxin II. The first step of the pathway is the synthesis of dehydroprobetaenone I by the polyketide synthase sthA and the enoyl reductase sthE via condensation of one acetyl-CoA starter unit with 7 malonyl-CoA units and 5 methylations. The C-terminal reductase (R) domain of sthA catalyzes the reductive release of the polyketide chain. Because sthA lacks a designated enoylreductase (ER) domain, the required activity is provided the enoyl reductase sthE. The short-chain dehydrogenase/reductase sthC then catalyzes reduction of dehydroprobetaenone I to probetaenone I. The cytochrome P450 monooxygenase sthF catalyzes successive epoxidation, oxidation (resulting from epoxide opening) and hydroxylation to install a tertiary alcohol in the decaline ring to yield betaenone C from dehydroprobetaenone I and betaenone B from probetaenone I. The FAD-linked oxidoreductase sthB is responsible for the conversion of betaenone C to betaenone A via an intramolecular aldol reaction between C-1 and C-17 to form the bridged tricyclic system in betaenone A. Finally, the cytochrome P450 monooxygenase sthD catalyzes the hydroxylation of C-15 to afford the final metabolite stemphyloxin II. In Phaeosphaeria nodorum (strain SN15 / ATCC MYA-4574 / FGSC 10173) (Glume blotch fungus), this protein is Cytochrome P450 monooxygenase sthF.